The chain runs to 688 residues: MWYLVLFSLLASFSAEPTMHGEILSPNYPQAYPNDVVKSWDIEVPEGFGIHLYFTHVDIEPSESCAYDSVQIISGGIEEGRLCGQRTSKSPNSPIIEEFQFPYNKLQVVFTSDFSIEEQFTGFAAYYTAIDVNECTDFTDVPCSHFCNNFIGGYFCSCPPEYFLHDDMRNCGVNCSGDVFTALIGEISSPNYPNPYPENSRCEYQIQLQEGFQVVVTMQREDFDVEPADSEGNCPDSLTFAAKNQQFGPYCGDGFPGPLTIRTQSNTLGIVFQTDLMGQKKGWKLRYHGDPISCPKESTANSNWEPDKAKYVFKDVVKITCVDGFEVVEGHVSSTSYYSTCQSDGQWSNSGLKCQPVYCGIPDPIANGKVEEPENSVFGTVIHYTCEEPYYYMEHEEGGEYRCAANGRWVNDQLGIELPRCIPVCGVPTEPFQVQQKIFGGQPAKIENFPWQVFFNHPTAGGALINEYWVLTAAHVVEKNSDPSMYAGITALRLADLENAQRLYTKRVIIHPGWKEDDDLNPRTNFDNDIALVQLKDPVKMGPKFSPICLPGTSSEYNLSPGDMGLISGWGRTEKRLHVINLRGAKVPVTSLETCKQVKEENPTARPEDYVITDNMICAGEKGVDSCKGDSGGAFAFQVPNVKAPKFYVAGLVSWGKKCGAYGVYTKVKNYVDWILKTMQENSGPRKD.

The first 15 residues, 1 to 15 (MWYLVLFSLLASFSA), serve as a signal peptide directing secretion. Residues 16–130 (EPTMHGEILS…TGFAAYYTAI (115 aa)) enclose the CUB 1 domain. The Ca(2+) site is built by Glu-60, Asp-68, Asp-113, Asp-131, Val-132, and Glu-134. Cys-65 and Cys-83 form a disulfide bridge. The EGF-like; calcium-binding domain occupies 131-172 (DVNECTDFTDVPCSHFCNNFIGGYFCSCPPEYFLHDDMRNCG). Cystine bridges form between Cys-135–Cys-147, Cys-143–Cys-156, and Cys-158–Cys-171. Positions 149, 150, and 153 each coordinate Ca(2+). Residue Asn-149 is modified to (3R)-3-hydroxyasparagine. Asn-174 carries N-linked (GlcNAc...) asparagine glycosylation. Cys-175 and Cys-202 are joined by a disulfide. One can recognise a CUB 2 domain in the interval 175–290 (CSGDVFTALI…KGWKLRYHGD (116 aa)). Ca(2+) is bound by residues Glu-226, Asp-236, Asp-275, Gly-278, and Gln-279. Residues Cys-234 and Cys-251 are joined by a disulfide bond. Sushi domains follow at residues 292–356 (ISCP…KCQP) and 357–423 (VYCG…RCIP). Cystine bridges form between Cys-294/Cys-341, Cys-321/Cys-354, Cys-359/Cys-403, Cys-386/Cys-421, Cys-425/Cys-549, Cys-595/Cys-618, and Cys-627/Cys-659. The 243-residue stretch at 438–680 (IFGGQPAKIE…YVDWILKTMQ (243 aa)) folds into the Peptidase S1 domain. Active-site charge relay system residues include His-475 and Asp-529. The Charge relay system role is filled by Ser-631.

Belongs to the peptidase S1 family. As to quaternary structure, core component of the complement C1 complex, a calcium-dependent complex composed of 1 molecule of the C1Q subcomplex, 2 molecules of C1R and 2 molecules of C1S. The C1Q subcomplex is composed 18 subunits: 3 chains of C1QA, C1QB, and C1QC trimerize to form 6 collagen-like triple helices connected to six globular ligand-recognition modules. In terms of processing, cleaved and activated by C1R to generate Complement C1s subcomponent heavy and light chains. Post-translationally, the iron and 2-oxoglutarate dependent 3-hydroxylation of aspartate and asparagine is (R) stereospecific within EGF domains. As to expression, specifically expressed in male reproductive tissues.

The protein resides in the secreted. The protein localises to the cell surface. It carries out the reaction Cleavage of Arg-|-Ala bond in complement component C4 to form C4a and C4b, and Lys(or Arg)-|-Lys bond in complement component C2 to form C2a and C2b: the 'classical' pathway C3 convertase.. With respect to regulation, cleaved and activated by C1R. Immunoglobulin-binding promotes autoactivation of C1R, which results in the cleavage of the Arg-Ile bond in the catalytic domain. Inhibited by C1 inhibitor (SERPING1). Functionally, component of the complement C1 complex, a multiprotein complex that initiates the classical pathway of the complement system, a cascade of proteins that leads to phagocytosis and breakdown of pathogens and signaling that strengthens the adaptive immune system. C1S is activated following association of the C1 complex with immunoglobulins (IgG or IgM) complexed with antigens to form antigen-antibody complexes on the surface of pathogens. C1S is cleaved and activated by C1R to generate C1s subcomponent heavy and light chains. C1s subcomponent light chain then cleaves and activates C2 and C4, the next components of the classical complement pathway. Serine protease component of the complement C1 complex, which catalyzes cleavage and activation of C2 and C4, the next components of the classical complement pathway. Also cleaves IGFBP5 and thereby inhibits the trophic effects of IGF1. The chain is Complement C1s-1 subcomponent from Mus musculus (Mouse).